The sequence spans 353 residues: S-adenosylmethionine:tRNA ribosyltransferase-isomerase (353 aa).

Belongs to the QueA family. In terms of assembly, monomer.

The protein localises to the cytoplasm. It carries out the reaction 7-aminomethyl-7-carbaguanosine(34) in tRNA + S-adenosyl-L-methionine = epoxyqueuosine(34) in tRNA + adenine + L-methionine + 2 H(+). Its pathway is tRNA modification; tRNA-queuosine biosynthesis. Its function is as follows. Transfers and isomerizes the ribose moiety from AdoMet to the 7-aminomethyl group of 7-deazaguanine (preQ1-tRNA) to give epoxyqueuosine (oQ-tRNA). In Cupriavidus metallidurans (strain ATCC 43123 / DSM 2839 / NBRC 102507 / CH34) (Ralstonia metallidurans), this protein is S-adenosylmethionine:tRNA ribosyltransferase-isomerase.